The sequence spans 367 residues: Protein SGT1 homolog (367 aa).

TPR repeat units lie at residues 6 to 39, 40 to 73, and 75 to 107; these read ASDLESKAKAAFVDDDFELAAELYTQAIEASPAT, AELYADRAQAHIKLGNYTEAVADANKAIELDPSM, and KAYLRKGAACIRLEEYQTAKAALELGYSFASGD. In terms of domain architecture, CS spans 165–254; that stretch reads KPKYRHDFYN…AEQITWTSLD (90 aa). 2 disordered regions span residues 261–289 and 347–367; these read AVPQKIIPPAESAQRPSYPSSKSKKDWDK and VGSKKVEGSPPDGMELKKWEY. Residues 277-367 form the SGS domain; the sequence is SYPSSKSKKD…DGMELKKWEY (91 aa).

Belongs to the SGT1 family. As to quaternary structure, interacts (via CS domain) with RAR1 (via CHORD 2 domain). Interacts with RAD6. Expressed in roots, root tips, shoot apical meristem (SAM), young leaves, flag leaves and ears.

The protein resides in the cytoplasm. Its subcellular location is the nucleus. Its function is as follows. Involved in basal disease resistance to bacterial blight (X.oryzae). May act as positive regulator of basal defense. Probably required for SCF-mediated ubiquitination, by coupling HSP90 to SCF complex for ubiquitination of HSP90 client proteins. The sequence is that of Protein SGT1 homolog from Oryza sativa subsp. japonica (Rice).